Reading from the N-terminus, the 782-residue chain is Endonuclease MutS2 (782 aa).

Residue 336-343 (GPNTGGKT) participates in ATP binding. The Smr domain occupies 707–782 (LDLRGYRYEE…GFGVTVAELK (76 aa)).

Belongs to the DNA mismatch repair MutS family. MutS2 subfamily. As to quaternary structure, homodimer. Binds to stalled ribosomes, contacting rRNA.

Functionally, endonuclease that is involved in the suppression of homologous recombination and thus may have a key role in the control of bacterial genetic diversity. Acts as a ribosome collision sensor, splitting the ribosome into its 2 subunits. Detects stalled/collided 70S ribosomes which it binds and splits by an ATP-hydrolysis driven conformational change. Acts upstream of the ribosome quality control system (RQC), a ribosome-associated complex that mediates the extraction of incompletely synthesized nascent chains from stalled ribosomes and their subsequent degradation. Probably generates substrates for RQC. This Staphylococcus carnosus (strain TM300) protein is Endonuclease MutS2.